A 91-amino-acid polypeptide reads, in one-letter code: Phosphocarrier protein NPr (91 aa).

The HPr domain maps to 3–90 (KLERQVTICN…ALVDAKFDEA (88 aa)). His-17 functions as the Pros-phosphohistidine intermediate in the catalytic mechanism.

It belongs to the HPr family.

The protein localises to the cytoplasm. Functionally, component of the phosphoenolpyruvate-dependent nitrogen-metabolic phosphotransferase system (nitrogen-metabolic PTS), that seems to be involved in regulating nitrogen metabolism. The phosphoryl group from phosphoenolpyruvate (PEP) is transferred to the phosphoryl carrier protein NPr by enzyme I-Ntr. Phospho-NPr then transfers it to EIIA-Ntr. Could function in the transcriptional regulation of sigma-54 dependent operons in conjunction with the NPr (PtsO) and EIIA-Ntr (PtsN) proteins. The sequence is that of Phosphocarrier protein NPr (ptsO) from Shewanella violacea (strain JCM 10179 / CIP 106290 / LMG 19151 / DSS12).